The primary structure comprises 167 residues: Inclusion membrane protein G (167 aa).

2 helical membrane passes run 37 to 57 and 63 to 83; these read LSLF…AVLF and VLPY…AVIV. Disordered stretches follow at residues 97–136 and 148–167; these read KRSP…STFG and VSGA…SHSF. Residues 122–134 are compositionally biased toward low complexity; the sequence is ESASPQASPTSST. The short motif at 161 to 166 is the Phosphorylation-dependent binding motif element; it reads RSRSHS. Ser166 carries the post-translational modification Phosphoserine.

Post-translationally, phosphorylated by chlamydial kinase Pnk1.

The protein localises to the secreted. The protein resides in the host vacuole. It is found in the host pathogen-containing vacuole. It localises to the host pathogen-containing vacuole membrane. Inclusion membrane protein probably involved in early modification events of the chlamydial inclusion. Binds to the host cell 14-3-3 beta (YWHAB); phosphorylation of Ser-166 is probably required. This Chlamydia trachomatis serovar D (strain ATCC VR-885 / DSM 19411 / UW-3/Cx) protein is Inclusion membrane protein G (incG).